We begin with the raw amino-acid sequence, 713 residues long: Leucine-rich repeat-containing protein 4B (713 aa).

An N-terminal signal peptide occupies residues 1 to 35 (MARARGSPCPPLPPGRMSWPHGALLFLWLFSPPLG). Residues 36 to 576 (AGGGGVAVTS…DLDDVMKTTK (541 aa)) lie on the Extracellular side of the membrane. The LRRNT domain maps to 48–86 (GGGSPPATSCPVACSCSNQASRVICTRRDLAEVPASIPV). LRR repeat units follow at residues 87 to 108 (NTRY…TFKH), 111 to 132 (HLEI…AFNG), 135 to 156 (SLNT…AFEY), 159 to 180 (KLRE…AFNR), 183 to 205 (SLRR…AFEG), 208 to 229 (NLRY…TALV), 230 to 251 (RLEE…SFQG), 254 to 275 (SLRK…AFDD), and 278 to 299 (SLEE…LFTP). An N-linked (GlcNAc...) asparagine glycan is attached at N224. N-linked (GlcNAc...) asparagine glycans are attached at residues N283, N333, N374, N400, N422, N425, N444, and N452. The region spanning 311–363 (NPWHCNCDVLWLSWWLKETVPSNTTCCARCHAPAGLKGRYIGELDQSHFTCYA) is the LRRCT domain. An Ig-like C2-type domain is found at 364–452 (PVIVEPPTDL…GNTTASATLN (89 aa)). C385 and C436 are joined by a disulfide. Residues 497 to 551 (TQPGEEALQPRGTEKEPPGPTTDGVWGGGRPGDAAGPASSSTTAPAPRSSRPTEK) are disordered. Residues 528–546 (GDAAGPASSSTTAPAPRSS) show a composition bias toward low complexity. A helical membrane pass occupies residues 577-597 (IIIGCFVAITFMAAVMLVAFY). At 598 to 713 (KLRKQHQLHK…SKENVQETQI (116 aa)) the chain is on the cytoplasmic side. S693 is subject to Phosphoserine. A disordered region spans residues 694-713 (IHEPLLFKSGSKENVQETQI). The span at 703–713 (GSKENVQETQI) shows a compositional bias: basic and acidic residues.

Interacts with PTPRF. Interacts with DLG4. N-glycosylated. O-glycosylated; contains sialic acid.

It is found in the membrane. The protein resides in the presynaptic cell membrane. In terms of biological role, synaptic adhesion protein. Regulates the formation of excitatory synapses. The trans-synaptic adhesion between LRRC4B and PTPRF regulates the formation of excitatory synapses in a bidirectional manner. This Homo sapiens (Human) protein is Leucine-rich repeat-containing protein 4B (LRRC4B).